The sequence spans 349 residues: Peroxidase 23 (349 aa).

The signal sequence occupies residues 1–29; that stretch reads MGFSSSLSCSAMGALIVGCLLLQASNSNA. Q30 carries the post-translational modification Pyrrolidone carboxylic acid. 4 disulfides stabilise this stretch: C40-C120, C73-C78, C126-C329, and C206-C238. Residue H71 is the Proton acceptor of the active site. Ca(2+) contacts are provided by D72, V75, G77, D79, and S81. An N-linked (GlcNAc...) asparagine glycan is attached at N86. P168 contributes to the substrate binding site. Heme b is bound at residue H199. T200 is a Ca(2+) binding site. N-linked (GlcNAc...) asparagine glycosylation is found at N217 and N243. D251, T254, and D259 together coordinate Ca(2+).

The protein belongs to the peroxidase family. Classical plant (class III) peroxidase subfamily. Requires heme b as cofactor. The cofactor is Ca(2+).

The protein resides in the secreted. It is found in the vacuole. The catalysed reaction is 2 a phenolic donor + H2O2 = 2 a phenolic radical donor + 2 H2O. Its function is as follows. Removal of H(2)O(2), oxidation of toxic reductants, biosynthesis and degradation of lignin, suberization, auxin catabolism, response to environmental stresses such as wounding, pathogen attack and oxidative stress. These functions might be dependent on each isozyme/isoform in each plant tissue. The protein is Peroxidase 23 (PER23) of Arabidopsis thaliana (Mouse-ear cress).